We begin with the raw amino-acid sequence, 1298 residues long: Phosphoribosylformylglycinamidine synthase (1298 aa).

The interval 298 to 328 is disordered; that stretch reads TAIAPFPGASTGSGGEIRDEGATGRGAKPKA. Residues 305 to 316, 384 to 386, and Ala676 each bind ATP; these read GASTGSGGEIRD and TGY. Residues Asp677, Glu716, Asn720, and Asp884 each contribute to the Mg(2+) site. Position 886 (Ser886) interacts with ATP. The Glutamine amidotransferase type-1 domain maps to 1045-1298; that stretch reads VAILREQGVN…MFRNARVWVD (254 aa). Cys1138 functions as the Nucleophile in the catalytic mechanism. Active-site residues include His1263 and Glu1265.

The protein in the N-terminal section; belongs to the FGAMS family. Monomer.

The protein localises to the cytoplasm. It catalyses the reaction N(2)-formyl-N(1)-(5-phospho-beta-D-ribosyl)glycinamide + L-glutamine + ATP + H2O = 2-formamido-N(1)-(5-O-phospho-beta-D-ribosyl)acetamidine + L-glutamate + ADP + phosphate + H(+). It functions in the pathway purine metabolism; IMP biosynthesis via de novo pathway; 5-amino-1-(5-phospho-D-ribosyl)imidazole from N(2)-formyl-N(1)-(5-phospho-D-ribosyl)glycinamide: step 1/2. In terms of biological role, phosphoribosylformylglycinamidine synthase involved in the purines biosynthetic pathway. Catalyzes the ATP-dependent conversion of formylglycinamide ribonucleotide (FGAR) and glutamine to yield formylglycinamidine ribonucleotide (FGAM) and glutamate. The chain is Phosphoribosylformylglycinamidine synthase from Pseudomonas aeruginosa (strain ATCC 15692 / DSM 22644 / CIP 104116 / JCM 14847 / LMG 12228 / 1C / PRS 101 / PAO1).